The following is a 256-amino-acid chain: Geranylgeranylglyceryl phosphate synthase (256 aa).

Mg(2+) is bound by residues Asp28 and Ser53. Residues 172-178 (YLEAGSG), 203-204 (GG), and 225-226 (GT) contribute to the sn-glycerol 1-phosphate site.

The protein belongs to the GGGP/HepGP synthase family. Group II subfamily. Mg(2+) serves as cofactor.

Its subcellular location is the cytoplasm. The catalysed reaction is sn-glycerol 1-phosphate + (2E,6E,10E)-geranylgeranyl diphosphate = sn-3-O-(geranylgeranyl)glycerol 1-phosphate + diphosphate. The protein operates within membrane lipid metabolism; glycerophospholipid metabolism. In terms of biological role, prenyltransferase that catalyzes the transfer of the geranylgeranyl moiety of geranylgeranyl diphosphate (GGPP) to the C3 hydroxyl of sn-glycerol-1-phosphate (G1P). This reaction is the first ether-bond-formation step in the biosynthesis of archaeal membrane lipids. This Methanococcus maripaludis (strain C6 / ATCC BAA-1332) protein is Geranylgeranylglyceryl phosphate synthase.